The sequence spans 397 residues: 1-carboxy-3-chloro-3,4-dihydroxycyclo hexa-1,5-diene dehydrogenase (397 aa).

It to P.putida PHT4.

In Comamonas testosteroni (Pseudomonas testosteroni), this protein is 1-carboxy-3-chloro-3,4-dihydroxycyclo hexa-1,5-diene dehydrogenase (cbaC).